An 849-amino-acid chain; its full sequence is uncharacterized protein (849 aa).

A run of 2 helical transmembrane segments spans residues 587–607 (VALG…LGLF) and 620–640 (AGIL…TGDW).

It is found in the cell membrane. This is an uncharacterized protein from Methanocaldococcus jannaschii (strain ATCC 43067 / DSM 2661 / JAL-1 / JCM 10045 / NBRC 100440) (Methanococcus jannaschii).